Here is a 321-residue protein sequence, read N- to C-terminus: Mas-related G-protein coupled receptor member D (321 aa).

The Extracellular portion of the chain corresponds to 1-8; it reads MNSTLDSS. N2 carries an N-linked (GlcNAc...) asparagine glycan. Residues 9–29 traverse the membrane as a helical segment; sequence PAPGLTISPTMDLVTWIYFSV. Residue T30 is a topological domain, cytoplasmic. A helical transmembrane segment spans residues 31 to 51; that stretch reads FLAMATCVGGMAGNSLVIWLL. Residues 52 to 72 lie on the Extracellular side of the membrane; that stretch reads SCNGMQRSPFCVYVLNLAVAD. Residues 73–93 form a helical membrane-spanning segment; sequence FLFLFCMASMLSLETGPLLIV. Topologically, residues 94–146 are cytoplasmic; that stretch reads NISAKIYEGMRRIKYFAYTAGLSLLTAISTQRCLSVLFPIWYKCHRPRHLSSV. The helical transmembrane segment at 147 to 167 threads the bilayer; that stretch reads VSGALWALAFLMNFLASFFCV. The Extracellular portion of the chain corresponds to 168 to 181; the sequence is QFWHPNKHQCFKVD. The chain crosses the membrane as a helical span at residues 182 to 202; that stretch reads IVFNSLILGIFMPVMILTSTI. Topologically, residues 203–220 are cytoplasmic; that stretch reads LFIRVRKNSLMQRRRPRR. A helical membrane pass occupies residues 221-241; sequence LYVVILTSILVFLTCSLPLGI. Topologically, residues 242 to 260 are extracellular; it reads NWFLLYWVDVKRDVRLLYS. Residues 261-281 form a helical membrane-spanning segment; it reads CVSRFSSSLSSSANPVIYFLV. Over 282–321 the chain is Cytoplasmic; sequence GSQKSHRLQESLGAVLGRALRDEPEPEGRETPSTCTNDGV. The span at 302-311 shows a compositional bias: basic and acidic residues; that stretch reads RDEPEPEGRE. The segment at 302-321 is disordered; that stretch reads RDEPEPEGRETPSTCTNDGV. Positions 312-321 are enriched in polar residues; that stretch reads TPSTCTNDGV.

It belongs to the G-protein coupled receptor 1 family. Mas subfamily. In terms of tissue distribution, expressed in a subset of sensory neurons that includes nociceptors. Expressed in the subclass of non-peptidergic sensory neurons that are IB4(+) and VR1(-).

It is found in the cell membrane. Its function is as follows. May regulate nociceptor function and/or development, including the sensation or modulation of pain. Functions as a specific membrane receptor for beta-alanine. The receptor couples with G-protein G(q) and G(i). This chain is Mas-related G-protein coupled receptor member D (Mrgprd), found in Mus musculus (Mouse).